Reading from the N-terminus, the 1069-residue chain is RE1-silencing transcription factor (1069 aa).

An interaction with SIN3A region spans residues 32-121; that stretch reads DLHDLSKAEL…SLELSVVEPQ (90 aa). Residues 43–57 are interaction with SIN3B; the sequence is APQLIMLANVALTGE. Residues 85-104 form a disordered region; sequence SDSEGEGLEESAELKGDPSG. The interval 144–417 is interaction with ZFP90; the sequence is PVAEDKCKNL…KSKHPTCPSK (274 aa). The C2H2-type 1 zinc-finger motif lies at 158-180; that stretch reads FRCKPCQYEAESEEQFVHHIRVH. A required for binding to the neuron-restrictive silencer element region spans residues 200–211; that stretch reads SGASPSEEGEFS. C2H2-type zinc fingers lie at residues 215 to 237, 247 to 269, 275 to 297, 303 to 325, 331 to 354, 360 to 382, and 388 to 411; these read IRCDRCGYNTNRYDHYTAHLKHH, YKCIICTYTTVSEYHWRKHLRNH, YTCSKCNYFSTEKNNYVQHVRTH, YKCELCPYSSSQKTHLTRHMRTH, FKCDQCNYVASNQHEVTRHARQVH, LNCPHCDYKTADRSNFKKHVELH, and FNCPVCDYAASKKCNLQYHFKSKH. Disordered stretches follow at residues 425-737 and 830-1022; these read KLKK…MELP and KASK…GKEG. Basic and acidic residues predominate over residues 451-482; sequence EQAKTKGVDASARRSERPVKGVGKDVPKEKKP. Residues 484–493 are compositionally biased toward polar residues; it reads SNASVVQVTT. 2 stretches are compositionally biased toward basic and acidic residues: residues 498 to 511 and 554 to 576; these read SAVETKAAEGKHTD and ESKPKTSGEVPKGSRVEDRKADK. A compositionally biased stretch (basic residues) spans 584–600; the sequence is KGGKKTALKTKTAKKGS. The segment covering 630-643 has biased composition (polar residues); it reads AVVTPSGSTQTELS. Composition is skewed to pro residues over residues 679–706 and 713–734; these read PSPPQEPPQVEPPACVEPPPPVEPPCPM and PSPPMEPSQVEPPPHLEPPLPM. 2 stretches are compositionally biased toward basic and acidic residues: residues 851 to 860 and 876 to 886; these read RREETPKDQE and GGTEEAGESRA. Over residues 894–904 the composition is skewed to low complexity; that stretch reads STSALSSEQSS. Residues 930–943 show a composition bias toward basic and acidic residues; that stretch reads TEQKTDRVPLKDSA. S948 is subject to Phosphoserine. Low complexity predominate over residues 957–968; the sequence is EAAAPAVVASPP. Residues 981–1059 are interaction with RCOR1; the sequence is EGIHSHDGSD…HLNRHLVNVY (79 aa). The C2H2-type 9 zinc finger occupies 1032–1054; the sequence is FVCIFCDRSFRKEKDYSKHLNRH.

As to quaternary structure, isoform 1 and isoform 6 form heterodimers. Isoform 6: Forms homodimers and homooligomers; binds to the neuron-restrictive silencer element (NRSE) as monomer. Interacts with SIN3A, SIN3B and RCOR1. Interacts with CDYL. Interacts with EHMT1 and EHMT2 only in the presence of CDYL. Part of a complex containing at least CDYL, REST, WIZ, SETB1, EHMT1 and EHMT2. Interacts (via zinc-finger DNA-binding domain) with ZFP90 (via N- and C-termini); the interaction inhibits REST repressor activity. Interacts (via C2H2-type zinc finger 5) with PRICKLE1. Interacts with FBXW11 and BTRC. Interacts with USP7. In terms of processing, O-glycosylated. Phosphorylated; phosphorylation is required for ubiquitination. Post-translationally, ubiquitinated; ubiquitination is mediated by BTRC and leads to proteasomal degradation in G2 phase. Ubiquitination increases during neuronal differentiation. Deubiquitinated by USP7; leading to its stabilization and promoting the maintenance of neural progenitor cells. In terms of tissue distribution, expressed in the hippocampus including the granule cell layer of the dentate gyrus, the pyramidal cell layers of CA1 and CA3, the apical and basilar dendrite layers of the stratum radiatum and stratum oriens of CA1, the stratum lucidum and stratum oriens of CA3 and in astroglia (at protein level). Expressed in the brain, with the highest levels in the neurons of hippocampus, pons/medulla and midbrain.

The protein resides in the nucleus. It is found in the cytoplasm. Functionally, transcriptional repressor which binds neuron-restrictive silencer element (NRSE) and represses neuronal gene transcription in non-neuronal cells. Restricts the expression of neuronal genes by associating with two distinct corepressors, SIN3A and RCOR1, which in turn recruit histone deacetylase to the promoters of REST-regulated genes. Mediates repression by recruiting the BHC complex at RE1/NRSE sites which acts by deacetylating and demethylating specific sites on histones, thereby acting as a chromatin modifier. Transcriptional repression by REST-CDYL via the recruitment of histone methyltransferase EHMT2 may be important in transformation suppression. Represses the expression of SRRM4 in non-neural cells to prevent the activation of neural-specific splicing events and to prevent production of REST isoform 6. Repressor activity may be inhibited by forming heterodimers with isoform 6, thereby preventing binding to NRSE or binding to corepressors and leading to derepression of target genes. Also maintains repression of neuronal genes in neural stem cells, and allows transcription and differentiation into neurons by dissociation from RE1/NRSE sites of target genes. Thereby is involved in maintaining the quiescent state of adult hippocampal neural stem cells and preventing premature differentiation into mature neurons. Plays a role in the developmental switch in synaptic NMDA receptor composition during postnatal development, by repressing GRIN2B expression and thereby altering NMDA receptor properties from containing primarily GRIN2B to primarily GRIN2A subunits. Acts as a regulator of osteoblast differentiation. Key repressor of gene expression in hypoxia; represses genes in hypoxia by direct binding to an RE1/NRSE site on their promoter regions. May also function in stress resistance in the brain during aging; possibly by regulating expression of genes involved in cell death and in the stress response. Repressor of gene expression in the hippocampus after ischemia by directly binding to RE1/NRSE sites and recruiting SIN3A and RCOR1 to promoters of target genes, thereby promoting changes in chromatin modifications and ischemia-induced cell death. After ischemia, might play a role in repression of miR-132 expression in hippocampal neurons, thereby leading to neuronal cell death. In terms of biological role, binds to the 3' region of the neuron-restrictive silencer element (NRSE), with lower affinity than full-length REST isoform 1. Exhibits weaker repressor activity compared to isoform 1. May negatively regulate the repressor activity of isoform 1 by binding to isoform 1, thereby preventing its binding to NRSE and leading to derepression of target genes. However, in another study, does not appear to be implicated in repressor activity of a NRSE motif-containing reporter construct nor in inhibitory activity on the isoform 1 transcriptional repressor activity. Post-transcriptional inactivation of REST by SRRM4-dependent alternative splicing into isoform 6 is required in mechanosensory hair cells in the inner ear for derepression of neuronal genes and hearing. This chain is RE1-silencing transcription factor (Rest), found in Rattus norvegicus (Rat).